The primary structure comprises 833 residues: cGMP-specific 3',5'-cyclic phosphodiesterase (833 aa).

The residue at position 60 (serine 60) is a Phosphoserine. The tract at residues 82–101 (FLSDSGKKEQMPLTSPRFDS) is disordered. 2 GAF domains span residues 122 to 272 (DVTA…GIVL) and 304 to 461 (SLEV…GLGI). Residues 494 to 818 (ETRELQALAA…QKWQALADQQ (325 aa)) enclose the PDEase domain. Residue histidine 571 is the Proton donor of the active site. Zn(2+) is bound by residues histidine 575, histidine 611, aspartate 612, and aspartate 722. Aspartate 612 serves as a coordination point for Mg(2+). Glutamine 775 contributes to the 3',5'-cyclic GMP binding site.

It belongs to the cyclic nucleotide phosphodiesterase family. Zn(2+) serves as cofactor. The cofactor is Mg(2+). In terms of processing, phosphorylation is regulated by binding of cGMP to the two allosteric sites. Phosphorylation by PRKG1 leads to its activation.

It carries out the reaction 3',5'-cyclic GMP + H2O = GMP + H(+). It participates in purine metabolism; 3',5'-cyclic GMP degradation; GMP from 3',5'-cyclic GMP: step 1/1. In terms of biological role, plays a role in signal transduction by regulating the intracellular concentration of cyclic nucleotides. This phosphodiesterase catalyzes the specific hydrolysis of cGMP to 5'-GMP. Specifically regulates nitric-oxide-generated cGMP. This Rattus norvegicus (Rat) protein is cGMP-specific 3',5'-cyclic phosphodiesterase (Pde5a).